We begin with the raw amino-acid sequence, 496 residues long: Transactivator/viroplasmin protein (496 aa).

Positions 102–128 (RPNQGIQIPKKNEDHSSSSSKEEKGIQ) are disordered. The segment covering 111–128 (KKNEDHSSSSSKEEKGIQ) has biased composition (basic and acidic residues).

It belongs to the caulimoviridae viroplasmin family.

It is found in the host cytoplasm. Its function is as follows. Enhances the translation of downstream ORFs on polycistronic mRNAs derived from carnation etched ring virus. The polypeptide is Transactivator/viroplasmin protein (Dianthus caryophyllus (Carnation)).